An 84-amino-acid polypeptide reads, in one-letter code: Small ribosomal subunit protein bS20 (84 aa).

The disordered stretch occupies residues 1–32; the sequence is MPRHESAKKRMRQNEKRQKRNKSQKSRVRTKI.

This sequence belongs to the bacterial ribosomal protein bS20 family.

Its function is as follows. Binds directly to 16S ribosomal RNA. The sequence is that of Small ribosomal subunit protein bS20 from Salinibacter ruber (strain DSM 13855 / M31).